The sequence spans 431 residues: Trigger factor (431 aa).

A PPIase FKBP-type domain is found at 160 to 245 (EDRVTIDFSG…LKKVEVMVLP (86 aa)).

This sequence belongs to the FKBP-type PPIase family. Tig subfamily.

The protein resides in the cytoplasm. It carries out the reaction [protein]-peptidylproline (omega=180) = [protein]-peptidylproline (omega=0). Involved in protein export. Acts as a chaperone by maintaining the newly synthesized protein in an open conformation. Functions as a peptidyl-prolyl cis-trans isomerase. The protein is Trigger factor of Actinobacillus succinogenes (strain ATCC 55618 / DSM 22257 / CCUG 43843 / 130Z).